The primary structure comprises 159 residues: Transcription elongation factor GreA (159 aa).

The stretch at 43 to 76 (LSENAEYDAAREEQSQLEAKIGDLENKLASATIL) forms a coiled coil.

The protein belongs to the GreA/GreB family.

Its function is as follows. Necessary for efficient RNA polymerase transcription elongation past template-encoded arresting sites. The arresting sites in DNA have the property of trapping a certain fraction of elongating RNA polymerases that pass through, resulting in locked ternary complexes. Cleavage of the nascent transcript by cleavage factors such as GreA or GreB allows the resumption of elongation from the new 3'terminus. GreA releases sequences of 2 to 3 nucleotides. This is Transcription elongation factor GreA from Chlorobaculum parvum (strain DSM 263 / NCIMB 8327) (Chlorobium vibrioforme subsp. thiosulfatophilum).